A 1009-amino-acid polypeptide reads, in one-letter code: 2-oxoglutarate dehydrogenase, mitochondrial (1009 aa).

A mitochondrion-targeting transit peptide spans 1 to 39; sequence MLRFIPSSAKARALRRSAVTAYRLNRLTCLSSLQQNRTF. Residues Arg305, Asp404, Asn437, Ile439, and Gln669 each contribute to the thiamine diphosphate site. 3 residues coordinate Mg(2+): Asp404, Asn437, and Ile439.

This sequence belongs to the alpha-ketoglutarate dehydrogenase family. The cofactor is thiamine diphosphate. Mg(2+) is required as a cofactor.

It localises to the mitochondrion matrix. It carries out the reaction N(6)-[(R)-lipoyl]-L-lysyl-[protein] + 2-oxoglutarate + H(+) = N(6)-[(R)-S(8)-succinyldihydrolipoyl]-L-lysyl-[protein] + CO2. Catabolite repressed. The 2-oxoglutarate dehydrogenase complex catalyzes the overall conversion of 2-oxoglutarate to succinyl-CoA and CO(2). It contains multiple copies of three enzymatic components: 2-oxoglutarate dehydrogenase (E1), dihydrolipoamide succinyltransferase (E2) and lipoamide dehydrogenase (E3). This Schizosaccharomyces pombe (strain 972 / ATCC 24843) (Fission yeast) protein is 2-oxoglutarate dehydrogenase, mitochondrial (kgd1).